Consider the following 206-residue polypeptide: TPR repeat-containing protein YrrB (206 aa).

6 TPR repeats span residues 1-23, 24-57, 59-91, 93-125, 127-159, and 160-193; these read MQEG…NKED, AIPY…DSSA, TAYY…GMEN, DLFY…NEND, EARF…DPGH, and ADAF…QPDH.

Monomer.

Could be an interacting mediator in the complex formation among RNA sulfuration components, RNA processing components, and aminoacyl-tRNA synthetases. This chain is TPR repeat-containing protein YrrB (yrrB), found in Bacillus subtilis (strain 168).